Consider the following 161-residue polypeptide: uncharacterized protein (161 aa).

Positions methionine 1–alanine 35 are cleaved as a signal peptide.

This is an uncharacterized protein from Archaeoglobus fulgidus (strain ATCC 49558 / DSM 4304 / JCM 9628 / NBRC 100126 / VC-16).